The chain runs to 402 residues: Nicotinate phosphoribosyltransferase (402 aa).

His224 carries the post-translational modification Phosphohistidine; by autocatalysis.

The protein belongs to the NAPRTase family. Post-translationally, transiently phosphorylated on a His residue during the reaction cycle. Phosphorylation strongly increases the affinity for substrates and increases the rate of nicotinate D-ribonucleotide production. Dephosphorylation regenerates the low-affinity form of the enzyme, leading to product release.

It catalyses the reaction nicotinate + 5-phospho-alpha-D-ribose 1-diphosphate + ATP + H2O = nicotinate beta-D-ribonucleotide + ADP + phosphate + diphosphate. The protein operates within cofactor biosynthesis; NAD(+) biosynthesis; nicotinate D-ribonucleotide from nicotinate: step 1/1. In terms of biological role, catalyzes the synthesis of beta-nicotinate D-ribonucleotide from nicotinate and 5-phospho-D-ribose 1-phosphate at the expense of ATP. In Neisseria meningitidis serogroup B (strain ATCC BAA-335 / MC58), this protein is Nicotinate phosphoribosyltransferase.